The primary structure comprises 21 residues: Granulitoxin (21 aa).

The segment at 1 to 21 is disordered; that stretch reads AKTGILDSDGPTVAGNSLSGT.

It is found in the secreted. The protein localises to the nematocyst. Injection into mice produces severe neurotoxic effects such as circular movements, aggressive behavior, dyspnea, tonic-clonic convulsion and death. This is Granulitoxin from Bunodosoma cangicum (Sea anemone).